A 306-amino-acid polypeptide reads, in one-letter code: Lipoyl synthase (306 aa).

Residues Cys-55, Cys-60, Cys-66, Cys-81, Cys-85, Cys-88, and Ser-294 each contribute to the [4Fe-4S] cluster site. In terms of domain architecture, Radical SAM core spans 67–283 (WNHRTATFLL…RSYALARGFT (217 aa)).

The protein belongs to the radical SAM superfamily. Lipoyl synthase family. [4Fe-4S] cluster is required as a cofactor.

Its subcellular location is the cytoplasm. It carries out the reaction [[Fe-S] cluster scaffold protein carrying a second [4Fe-4S](2+) cluster] + N(6)-octanoyl-L-lysyl-[protein] + 2 oxidized [2Fe-2S]-[ferredoxin] + 2 S-adenosyl-L-methionine + 4 H(+) = [[Fe-S] cluster scaffold protein] + N(6)-[(R)-dihydrolipoyl]-L-lysyl-[protein] + 4 Fe(3+) + 2 hydrogen sulfide + 2 5'-deoxyadenosine + 2 L-methionine + 2 reduced [2Fe-2S]-[ferredoxin]. Its pathway is protein modification; protein lipoylation via endogenous pathway; protein N(6)-(lipoyl)lysine from octanoyl-[acyl-carrier-protein]: step 2/2. Functionally, catalyzes the radical-mediated insertion of two sulfur atoms into the C-6 and C-8 positions of the octanoyl moiety bound to the lipoyl domains of lipoate-dependent enzymes, thereby converting the octanoylated domains into lipoylated derivatives. This is Lipoyl synthase from Chloroflexus aurantiacus (strain ATCC 29364 / DSM 637 / Y-400-fl).